Reading from the N-terminus, the 233-residue chain is 7-cyano-7-deazaguanine synthase 2 (233 aa).

8-18 lines the ATP pocket; it reads LSGGLDSTTCM. 4 residues coordinate Zn(2+): Cys-186, Cys-194, Cys-197, and Cys-200.

Belongs to the QueC family. As to quaternary structure, homodimer. Zn(2+) is required as a cofactor.

The enzyme catalyses 7-carboxy-7-deazaguanine + NH4(+) + ATP = 7-cyano-7-deazaguanine + ADP + phosphate + H2O + H(+). It participates in purine metabolism; 7-cyano-7-deazaguanine biosynthesis. In terms of biological role, catalyzes the ATP-dependent conversion of 7-carboxy-7-deazaguanine (CDG) to 7-cyano-7-deazaguanine (preQ(0)). The sequence is that of 7-cyano-7-deazaguanine synthase 2 from Desulfitobacterium hafniense (strain Y51).